Here is a 494-residue protein sequence, read N- to C-terminus: Protein transport protein Sec61 subunit alpha (494 aa).

10 helical membrane passes run Leu-36 to Ile-56, Leu-79 to Gly-99, Leu-122 to Gly-142, Leu-147 to Ile-167, Tyr-177 to Trp-197, Leu-249 to Leu-269, Met-294 to Tyr-314, Ile-359 to Leu-379, Ala-426 to Ile-446, and Thr-450 to Val-470.

It belongs to the SecY/SEC61-alpha family. In terms of assembly, heterotrimeric complex composed of SEC61-alpha, SEC61-beta and SEC61-gamma.

Its subcellular location is the endoplasmic reticulum membrane. Its function is as follows. Appears to play a crucial role in the insertion of secretory and membrane polypeptides into the ER. It is required for assembly of membrane and secretory proteins. The sequence is that of Protein transport protein Sec61 subunit alpha from Pyrenomonas salina.